Here is an 84-residue protein sequence, read N- to C-terminus: Putative membrane protein insertion efficiency factor (84 aa).

Belongs to the UPF0161 family.

It localises to the cell inner membrane. Could be involved in insertion of integral membrane proteins into the membrane. The polypeptide is Putative membrane protein insertion efficiency factor (Shewanella halifaxensis (strain HAW-EB4)).